A 460-amino-acid chain; its full sequence is A-type ATP synthase subunit B (460 aa).

Belongs to the ATPase alpha/beta chains family. In terms of assembly, has multiple subunits with at least A(3), B(3), C, D, E, F, H, I and proteolipid K(x).

It localises to the cell membrane. Its function is as follows. Component of the A-type ATP synthase that produces ATP from ADP in the presence of a proton gradient across the membrane. The B chain is a regulatory subunit. In Thermoplasma volcanium (strain ATCC 51530 / DSM 4299 / JCM 9571 / NBRC 15438 / GSS1), this protein is A-type ATP synthase subunit B.